Consider the following 370-residue polypeptide: Gibberellin 3-beta-dioxygenase 2-2 (370 aa).

In terms of domain architecture, Fe2OG dioxygenase spans 205–306; it reads MTATMHLNWY…RISLGYFLGP (102 aa). The Fe cation site is built by His-229, Asp-231, and His-287. Arg-297 is an active-site residue.

It belongs to the iron/ascorbate-dependent oxidoreductase family. GA3OX subfamily. It depends on L-ascorbate as a cofactor. Requires Fe cation as cofactor.

It carries out the reaction gibberellin A20 + 2-oxoglutarate + O2 = gibberellin A1 + succinate + CO2. Functionally, converts the inactive gibberellin precursors GA9 and GA20 in the bioactives gibberellins GA4 and GA1. This Triticum aestivum (Wheat) protein is Gibberellin 3-beta-dioxygenase 2-2 (GA3ox2-2).